The chain runs to 241 residues: Probable phosphatase Cthe_0111 (241 aa).

His8, His10, His16, His41, Glu74, His102, His132, Asp192, and His194 together coordinate Zn(2+).

Belongs to the PHP family. Requires Zn(2+) as cofactor.

In Acetivibrio thermocellus (strain ATCC 27405 / DSM 1237 / JCM 9322 / NBRC 103400 / NCIMB 10682 / NRRL B-4536 / VPI 7372) (Clostridium thermocellum), this protein is Probable phosphatase Cthe_0111.